A 364-amino-acid polypeptide reads, in one-letter code: DNA replication and repair protein RecF (364 aa).

An ATP-binding site is contributed by 30–37; that stretch reads GDNGAGKT.

The protein belongs to the RecF family.

It localises to the cytoplasm. In terms of biological role, the RecF protein is involved in DNA metabolism; it is required for DNA replication and normal SOS inducibility. RecF binds preferentially to single-stranded, linear DNA. It also seems to bind ATP. This is DNA replication and repair protein RecF from Stenotrophomonas maltophilia (strain R551-3).